Here is a 117-residue protein sequence, read N- to C-terminus: Large ribosomal subunit protein bL20c (117 aa).

This sequence belongs to the bacterial ribosomal protein bL20 family.

Its subcellular location is the plastid. The protein resides in the chloroplast. Functionally, binds directly to 23S ribosomal RNA and is necessary for the in vitro assembly process of the 50S ribosomal subunit. It is not involved in the protein synthesizing functions of that subunit. This chain is Large ribosomal subunit protein bL20c, found in Arabis hirsuta (Hairy rock-cress).